Consider the following 288-residue polypeptide: NAD(P)H-hydrate epimerase (288 aa).

Residues 1–59 constitute a mitochondrion transit peptide; it reads MSGLRALLGLGLPVAGSRLPRVRVQAGACRARPTWWGPQRLISGGRGDVEGMASSAVKY. The region spanning 65-275 is the YjeF N-terminal domain; the sequence is AQAVDQELFN…ALEKKYQLNL (211 aa). (6S)-NADPHX is bound at residue 119-123; that stretch reads NNGGD. Asn-120 lines the K(+) pocket. At Lys-144 the chain carries N6-succinyllysine. Asp-185 contacts K(+). Residues 189-195 and Asp-218 contribute to the (6S)-NADPHX site; that span reads GFSFKGE. Ser-221 provides a ligand contact to K(+).

It belongs to the NnrE/AIBP family. Homodimer. Interacts with APOA1 and APOA2. K(+) serves as cofactor. Undergoes physiological phosphorylation during sperm capacitation, downstream to PKA activation.

The protein localises to the mitochondrion. It is found in the secreted. It catalyses the reaction (6R)-NADHX = (6S)-NADHX. It carries out the reaction (6R)-NADPHX = (6S)-NADPHX. In terms of biological role, catalyzes the epimerization of the S- and R-forms of NAD(P)HX, a damaged form of NAD(P)H that is a result of enzymatic or heat-dependent hydration. This is a prerequisite for the S-specific NAD(P)H-hydrate dehydratase to allow the repair of both epimers of NAD(P)HX. Accelerates cholesterol efflux from endothelial cells to high-density lipoprotein (HDL) and thereby regulates angiogenesis. This is NAD(P)H-hydrate epimerase from Sus scrofa (Pig).